The following is a 371-amino-acid chain: MYSENPIKRRASTRIYVGDVPIGDGAPIAVQSMTNTLTTDVDATVAQIRALENVGADIVRVSVPTMDAAEAFKLIKQQSNIPLIADIHFDYRIALKVAEYGVDCLRINPGNIGNEERIRSVVECARDKNIPIRIGINGGSLEKDLMDKYKEPTPEALLESAMRHVDILDRLNFDQFKVSVKASDVFLAVEAYRLLAKQIVQPLHLGITEAGGARSGSVKSAVGLGMLLAEGIGDTLRVSLAADPVEEIKVGFDILKSLRIRSRGINFIACPSCSRQEFDVISTVNELERRLEDIVTPMDVSIIGCVVNGPGEALVSDIGLTGGARKSGYFDDGVRQKERFDNDNIVDSLEAKIRAKASIINGRIPAQDINK.

[4Fe-4S] cluster contacts are provided by C270, C273, C305, and E312.

Belongs to the IspG family. [4Fe-4S] cluster is required as a cofactor.

The catalysed reaction is (2E)-4-hydroxy-3-methylbut-2-enyl diphosphate + oxidized [flavodoxin] + H2O + 2 H(+) = 2-C-methyl-D-erythritol 2,4-cyclic diphosphate + reduced [flavodoxin]. Its pathway is isoprenoid biosynthesis; isopentenyl diphosphate biosynthesis via DXP pathway; isopentenyl diphosphate from 1-deoxy-D-xylulose 5-phosphate: step 5/6. Converts 2C-methyl-D-erythritol 2,4-cyclodiphosphate (ME-2,4cPP) into 1-hydroxy-2-methyl-2-(E)-butenyl 4-diphosphate. The chain is 4-hydroxy-3-methylbut-2-en-1-yl diphosphate synthase (flavodoxin) from Shewanella sediminis (strain HAW-EB3).